The chain runs to 219 residues: Interleukin-12 subunit alpha (219 aa).

A signal peptide spans 1–22; sequence MCPARSLLLVATLVLLDHLSLA. 3 cysteine pairs are disulfide-bonded: C37/C110, C64/C196, and C85/C123. 2 N-linked (GlcNAc...) asparagine glycosylation sites follow: N93 and N107.

The protein belongs to the IL-6 superfamily. As to quaternary structure, heterodimer with IL12B; disulfide-linked. This heterodimer is known as interleukin IL-12. Heterodimer with EBI3/IL27B; not disulfide-linked. This heterodimer is known as interleukin IL-35. Interacts with NBR1; this interaction promotes IL-12 secretion.

It is found in the secreted. Heterodimerizes with IL12B to form the IL-12 cytokine or with EBI3/IL27B to form the IL-35 cytokine. IL-12 is primarily produced by professional antigen-presenting cells (APCs) such as B-cells and dendritic cells (DCs) as well as macrophages and granulocytes and regulates T-cell and natural killer-cell responses, induces the production of interferon-gamma (IFN-gamma), favors the differentiation of T-helper 1 (Th1) cells and is an important link between innate resistance and adaptive immunity. Mechanistically, exerts its biological effects through a receptor composed of IL12R1 and IL12R2 subunits. Binding to the receptor results in the rapid tyrosine phosphorylation of a number of cellular substrates including the JAK family kinases TYK2 and JAK2. In turn, recruited STAT4 gets phosphorylated and translocates to the nucleus where it regulates cytokine/growth factor responsive genes. As part of IL-35, plays essential roles in maintaining the immune homeostasis of the liver microenvironment and also functions as an immune-suppressive cytokine. Mediates biological events through unconventional receptors composed of IL12RB2 and gp130/IL6ST heterodimers or homodimers. Signaling requires the transcription factors STAT1 and STAT4, which form a unique heterodimer that binds to distinct DNA sites. The protein is Interleukin-12 subunit alpha (IL12A) of Homo sapiens (Human).